The primary structure comprises 399 residues: Acetate kinase (399 aa).

Residue Asn8 participates in Mg(2+) binding. Position 15 (Lys15) interacts with ATP. Arg89 lines the substrate pocket. The active-site Proton donor/acceptor is Asp146. Residues 206–210, 283–285, and 331–335 each bind ATP; these read HVGNG, DMR, and GMGEN. Glu383 is a binding site for Mg(2+).

It belongs to the acetokinase family. Homodimer. It depends on Mg(2+) as a cofactor. Mn(2+) is required as a cofactor.

It localises to the cytoplasm. It carries out the reaction acetate + ATP = acetyl phosphate + ADP. It participates in metabolic intermediate biosynthesis; acetyl-CoA biosynthesis; acetyl-CoA from acetate: step 1/2. Functionally, catalyzes the formation of acetyl phosphate from acetate and ATP. Can also catalyze the reverse reaction. The polypeptide is Acetate kinase (Streptococcus equi subsp. zooepidemicus (strain H70)).